Reading from the N-terminus, the 455-residue chain is Glutamate-1-semialdehyde 2,1-aminomutase (455 aa).

Residue K286 is modified to N6-(pyridoxal phosphate)lysine.

This sequence belongs to the class-III pyridoxal-phosphate-dependent aminotransferase family. HemL subfamily. As to quaternary structure, homodimer. The cofactor is pyridoxal 5'-phosphate.

It localises to the cytoplasm. It carries out the reaction (S)-4-amino-5-oxopentanoate = 5-aminolevulinate. It functions in the pathway porphyrin-containing compound metabolism; protoporphyrin-IX biosynthesis; 5-aminolevulinate from L-glutamyl-tRNA(Glu): step 2/2. The chain is Glutamate-1-semialdehyde 2,1-aminomutase from Clavibacter sepedonicus (Clavibacter michiganensis subsp. sepedonicus).